The chain runs to 465 residues: 3-isopropylmalate dehydratase large subunit (465 aa).

[4Fe-4S] cluster-binding residues include Cys-346, Cys-406, and Cys-409.

It belongs to the aconitase/IPM isomerase family. LeuC type 1 subfamily. In terms of assembly, heterodimer of LeuC and LeuD. [4Fe-4S] cluster serves as cofactor.

It catalyses the reaction (2R,3S)-3-isopropylmalate = (2S)-2-isopropylmalate. It functions in the pathway amino-acid biosynthesis; L-leucine biosynthesis; L-leucine from 3-methyl-2-oxobutanoate: step 2/4. Catalyzes the isomerization between 2-isopropylmalate and 3-isopropylmalate, via the formation of 2-isopropylmaleate. This is 3-isopropylmalate dehydratase large subunit from Psychromonas ingrahamii (strain DSM 17664 / CCUG 51855 / 37).